The primary structure comprises 308 residues: Aspartate carbamoyltransferase catalytic subunit (308 aa).

Positions 57 and 58 each coordinate carbamoyl phosphate. Lys-86 lines the L-aspartate pocket. Carbamoyl phosphate is bound by residues Arg-107, His-135, and Gln-138. 2 residues coordinate L-aspartate: Arg-168 and Arg-228. Carbamoyl phosphate contacts are provided by Leu-267 and Pro-268.

This sequence belongs to the aspartate/ornithine carbamoyltransferase superfamily. ATCase family. Heterododecamer (2C3:3R2) of six catalytic PyrB chains organized as two trimers (C3), and six regulatory PyrI chains organized as three dimers (R2).

It catalyses the reaction carbamoyl phosphate + L-aspartate = N-carbamoyl-L-aspartate + phosphate + H(+). Its pathway is pyrimidine metabolism; UMP biosynthesis via de novo pathway; (S)-dihydroorotate from bicarbonate: step 2/3. Functionally, catalyzes the condensation of carbamoyl phosphate and aspartate to form carbamoyl aspartate and inorganic phosphate, the committed step in the de novo pyrimidine nucleotide biosynthesis pathway. The polypeptide is Aspartate carbamoyltransferase catalytic subunit (Leptospira borgpetersenii serovar Hardjo-bovis (strain JB197)).